Consider the following 869-residue polypeptide: Alanine--tRNA ligase (869 aa).

The Zn(2+) site is built by histidine 559, histidine 563, cysteine 660, and histidine 664.

It belongs to the class-II aminoacyl-tRNA synthetase family. Zn(2+) is required as a cofactor.

It localises to the cytoplasm. It catalyses the reaction tRNA(Ala) + L-alanine + ATP = L-alanyl-tRNA(Ala) + AMP + diphosphate. Its function is as follows. Catalyzes the attachment of alanine to tRNA(Ala) in a two-step reaction: alanine is first activated by ATP to form Ala-AMP and then transferred to the acceptor end of tRNA(Ala). Also edits incorrectly charged Ser-tRNA(Ala) and Gly-tRNA(Ala) via its editing domain. The chain is Alanine--tRNA ligase from Herminiimonas arsenicoxydans.